Consider the following 336-residue polypeptide: Ultraviolet-sensitive opsin (336 aa).

Topologically, residues 1–29 (MDAWTYQFGNLSKISPFEGPQYHLAPKWA) are extracellular. The N-linked (GlcNAc...) asparagine glycan is linked to N10. The chain crosses the membrane as a helical span at residues 30 to 54 (FYLQAAFMGFVFFVGTPLNAIVLFV). Topologically, residues 55–66 (TMKYKKLRQPLN) are cytoplasmic. The helical transmembrane segment at 67 to 91 (YILVNISLGGFIFDTFSVSQVFFSA) threads the bilayer. Residues 92–106 (LRGYYFFGYTLCAME) are Extracellular-facing. An intrachain disulfide couples C103 to C180. A helical transmembrane segment spans residues 107 to 126 (AAMGSIAGLVTGWSLAVLAF). Residues 127–145 (ERYVVICKPFGSFKFGQSQ) are Cytoplasmic-facing. A helical membrane pass occupies residues 146 to 169 (ALGAVALTWIIGIGCATPPFWGWS). At 170 to 195 (RYIPEGIGTACGPDWYTKNEEYNTES) the chain is on the extracellular side. Residues 196 to 223 (YTYFLLVSCFMMPIMIITFSYSQLLGAL) traverse the membrane as a helical segment. The Cytoplasmic portion of the chain corresponds to 224–245 (RAVAAQQAESASTQKAEKEVSR). A helical transmembrane segment spans residues 246–269 (MVVVMVGSFVVCYGPYAITALYFS). Residues 270–277 (YAEDSNKD) lie on the Extracellular side of the membrane. Residues 278–302 (YRLVAIPSLFSKSSCVYNPLIYAFM) form a helical membrane-spanning segment. N6-(retinylidene)lysine is present on K289. The Cytoplasmic segment spans residues 303 to 336 (NKQFNACIMETVFGKKIDESSEVSSKTETSSVSA).

It belongs to the G-protein coupled receptor 1 family. Opsin subfamily. Post-translationally, phosphorylated on some or all of the serine and threonine residues present in the C-terminal region.

It localises to the membrane. Its function is as follows. Visual pigments are the light-absorbing molecules that mediate vision. They consist of an apoprotein, opsin, covalently linked to cis-retinal. This chain is Ultraviolet-sensitive opsin, found in Carassius auratus (Goldfish).